We begin with the raw amino-acid sequence, 514 residues long: Glycosyltransferase-like At3g57200 (514 aa).

The segment at 1–23 is disordered; sequence MAGLYSSSSSSKPTLSSSPSSSS. A signal peptide spans 1–39; that stretch reads MAGLYSSSSSSKPTLSSSPSSSSSSRLFLLVTLLPLSLA. N-linked (GlcNAc...) asparagine glycosylation is found at asparagine 156, asparagine 187, asparagine 251, and asparagine 460. The interval 457 to 514 is disordered; the sequence is PSKNSSTADSTSGITRESSQETGKRRVLEFHLDVDGESQASAVPPQSPPGLEATQMEL. The span at 458–473 shows a compositional bias: polar residues; the sequence is SKNSSTADSTSGITRE. The span at 474 to 490 shows a compositional bias: basic and acidic residues; it reads SSQETGKRRVLEFHLDV.

The protein belongs to the glycosyltransferase 25 family.

The protein localises to the secreted. Its subcellular location is the cell wall. It localises to the cytoplasm. The protein resides in the cell membrane. Functionally, involved in the coordination between cell elongation and cellulose synthesis by promoting the expression of genes involved in cell elongation and cellulose synthesis. Acts as a regulator of plasmodesmatal permeability. Maybe a glycosyltransferase. This Arabidopsis thaliana (Mouse-ear cress) protein is Glycosyltransferase-like At3g57200.